The chain runs to 156 residues: S-ribosylhomocysteine lyase (156 aa).

Fe cation contacts are provided by His56, His60, and Cys123.

This sequence belongs to the LuxS family. In terms of assembly, homodimer. The cofactor is Fe cation.

It catalyses the reaction S-(5-deoxy-D-ribos-5-yl)-L-homocysteine = (S)-4,5-dihydroxypentane-2,3-dione + L-homocysteine. Its function is as follows. Involved in the synthesis of autoinducer 2 (AI-2) which is secreted by bacteria and is used to communicate both the cell density and the metabolic potential of the environment. The regulation of gene expression in response to changes in cell density is called quorum sensing. Catalyzes the transformation of S-ribosylhomocysteine (RHC) to homocysteine (HC) and 4,5-dihydroxy-2,3-pentadione (DPD). The polypeptide is S-ribosylhomocysteine lyase (Staphylococcus aureus (strain bovine RF122 / ET3-1)).